The sequence spans 116 residues: Putative iron-sulfur cluster insertion protein ErpA (116 aa).

Residues cysteine 44, cysteine 108, and cysteine 110 each coordinate iron-sulfur cluster.

This sequence belongs to the HesB/IscA family. Homodimer. Requires iron-sulfur cluster as cofactor.

Its function is as follows. Required for insertion of 4Fe-4S clusters. This chain is Putative iron-sulfur cluster insertion protein ErpA, found in Aromatoleum aromaticum (strain DSM 19018 / LMG 30748 / EbN1) (Azoarcus sp. (strain EbN1)).